A 599-amino-acid chain; its full sequence is Riboflavin biosynthesis protein PYRR, chloroplastic (599 aa).

The transit peptide at 1–17 directs the protein to the chloroplast; sequence MALSFRISSSSPLICRA. Positions 30–152 constitute a CMP/dCMP-type deaminase domain; sequence TTDAAFIRRA…ELRSHGIEVN (123 aa).

The protein in the C-terminal section; belongs to the YbiA family.

The protein resides in the plastid. Its subcellular location is the chloroplast. It carries out the reaction 5-amino-6-(5-phospho-D-ribitylamino)uracil + NADP(+) = 5-amino-6-(5-phospho-D-ribosylamino)uracil + NADPH + H(+). The catalysed reaction is 2,5-diamino-6-hydroxy-4-(5-phosphoribosylamino)-pyrimidine + H2O = 2,5,6-triamino-4-hydroxypyrimidine + D-ribose 5-phosphate. It catalyses the reaction 5-amino-6-(5-phospho-D-ribosylamino)uracil + H2O = 5,6-diaminouracil + D-ribose 5-phosphate. It participates in cofactor biosynthesis; riboflavin biosynthesis; 5-amino-6-(D-ribitylamino)uracil from GTP: step 3/4. Functionally, pyrimidine reductase involved in the riboflavin biosynthesis pathway. Also has a non-functional N-terminal deaminase domain that lacks the catalytically essential zinc-binding residues. Its function is as follows. Catalyzes the hydrolysis of the N-glycosidic bond in the first two intermediates of riboflavin biosynthesis, which are highly reactive metabolites, yielding relatively innocuous products. Thus, can divert a surplus of harmful intermediates into relatively harmless products and pre-empt the damage these intermediates would otherwise do. Helps maintain flavin levels. Has no activity against GTP, nucleoside monophosphates or ADP-ribose. The chain is Riboflavin biosynthesis protein PYRR, chloroplastic (PYRR) from Arabidopsis thaliana (Mouse-ear cress).